The following is a 118-amino-acid chain: UPF0342 protein BT9727_0768 (118 aa).

The protein belongs to the UPF0342 family.

In Bacillus thuringiensis subsp. konkukian (strain 97-27), this protein is UPF0342 protein BT9727_0768.